The sequence spans 375 residues: Probable trehalose-phosphate phosphatase 7 (375 aa).

It belongs to the trehalose phosphatase family. A divalent metal cation is required as a cofactor.

It catalyses the reaction alpha,alpha-trehalose 6-phosphate + H2O = alpha,alpha-trehalose + phosphate. The protein operates within glycan biosynthesis; trehalose biosynthesis. Removes the phosphate from trehalose 6-phosphate to produce free trehalose. Trehalose accumulation in plant may improve abiotic stress tolerance. The sequence is that of Probable trehalose-phosphate phosphatase 7 (TPP7) from Oryza sativa subsp. japonica (Rice).